Here is a 35-residue protein sequence, read N- to C-terminus: Photosystem II reaction center protein T (35 aa).

The chain crosses the membrane as a helical span at residues Ala-3 to Phe-23.

Belongs to the PsbT family. As to quaternary structure, PSII is composed of 1 copy each of membrane proteins PsbA, PsbB, PsbC, PsbD, PsbE, PsbF, PsbH, PsbI, PsbJ, PsbK, PsbL, PsbM, PsbT, PsbY, PsbZ, Psb30/Ycf12, at least 3 peripheral proteins of the oxygen-evolving complex and a large number of cofactors. It forms dimeric complexes.

The protein localises to the plastid. It localises to the chloroplast thylakoid membrane. In terms of biological role, found at the monomer-monomer interface of the photosystem II (PS II) dimer, plays a role in assembly and dimerization of PSII. PSII is a light-driven water plastoquinone oxidoreductase, using light energy to abstract electrons from H(2)O, generating a proton gradient subsequently used for ATP formation. The sequence is that of Photosystem II reaction center protein T from Welwitschia mirabilis (Tree tumbo).